Consider the following 386-residue polypeptide: Chorismate synthase (386 aa).

Residues arginine 45 and arginine 51 each coordinate NADP(+). FMN-binding positions include 131 to 133 (RTS), 251 to 252 (QG), serine 294, 309 to 313 (KPIPS), and arginine 335.

It belongs to the chorismate synthase family. Homotetramer. FMNH2 serves as cofactor.

It carries out the reaction 5-O-(1-carboxyvinyl)-3-phosphoshikimate = chorismate + phosphate. Its pathway is metabolic intermediate biosynthesis; chorismate biosynthesis; chorismate from D-erythrose 4-phosphate and phosphoenolpyruvate: step 7/7. Catalyzes the anti-1,4-elimination of the C-3 phosphate and the C-6 proR hydrogen from 5-enolpyruvylshikimate-3-phosphate (EPSP) to yield chorismate, which is the branch point compound that serves as the starting substrate for the three terminal pathways of aromatic amino acid biosynthesis. This reaction introduces a second double bond into the aromatic ring system. The chain is Chorismate synthase from Clostridium tetani (strain Massachusetts / E88).